The following is a 343-amino-acid chain: Probable dolichyl-diphosphooligosaccharide--protein glycosyltransferase subunit 3A (343 aa).

The first 22 residues, 1–22 (MVIQTNLSYRFFILIVFLFTLA), serve as a signal peptide directing secretion. Topologically, residues 23–185 (NPKSDSDLKN…TVCSIQRPPL (163 aa)) are lumenal. Asparagine 105, asparagine 108, and asparagine 146 each carry an N-linked (GlcNAc...) asparagine glycan. A helical transmembrane segment spans residues 186 to 206 (ISKTQIGIIVAIIIISTPILI). Topologically, residues 207 to 220 (KKILKGETLLHDHR) are cytoplasmic. The helical transmembrane segment at 221–241 (IWLVGAVFVYFFSVSGTMHNI) threads the bilayer. Residues 242 to 273 (IREMPMYIKDYEDSSKFVFFIEESEMQLGAEG) lie on the Lumenal side of the membrane. A helical transmembrane segment spans residues 274-294 (FFVGFLYTVVGLLLAFVTNVV). Topologically, residues 295–304 (VRVKKLDEQR) are cytoplasmic. A helical membrane pass occupies residues 305–325 (MAMLLALSISFWAVRKVVYLD). Topologically, residues 326 to 343 (NWKTGYEIYPYWPSSWRG) are lumenal.

Belongs to the OST3/OST6 family. As to quaternary structure, component of the oligosaccharyltransferase (OST) complex.

It is found in the endoplasmic reticulum membrane. In terms of biological role, subunit of the oligosaccharyl transferase (OST) complex that catalyzes the initial transfer of a defined glycan (Glc(3)Man(9)GlcNAc(2) in eukaryotes) from the lipid carrier dolichol-pyrophosphate to an asparagine residue within an Asn-X-Ser/Thr consensus motif in nascent polypeptide chains, the first step in protein N-glycosylation. N-glycosylation occurs cotranslationally and the complex associates with the Sec61 complex at the channel-forming translocon complex that mediates protein translocation across the endoplasmic reticulum (ER). All subunits are required for a maximal enzyme activity. The chain is Probable dolichyl-diphosphooligosaccharide--protein glycosyltransferase subunit 3A (OST3A) from Arabidopsis thaliana (Mouse-ear cress).